Reading from the N-terminus, the 241-residue chain is ATP synthase subunit a (241 aa).

Transmembrane regions (helical) follow at residues 30–50 (GQVF…ISVG), 91–111 (FIGT…LIPW), 128–148 (INTT…AGLS), 193–213 (LVVG…VMFL), and 214–234 (GLFT…YYIG).

It belongs to the ATPase A chain family. In terms of assembly, F-type ATPases have 2 components, CF(1) - the catalytic core - and CF(0) - the membrane proton channel. CF(1) has five subunits: alpha(3), beta(3), gamma(1), delta(1), epsilon(1). CF(0) has four main subunits: a, b, b' and c.

It is found in the cellular thylakoid membrane. Key component of the proton channel; it plays a direct role in the translocation of protons across the membrane. The protein is ATP synthase subunit a of Prochlorococcus marinus subsp. pastoris (strain CCMP1986 / NIES-2087 / MED4).